A 131-amino-acid chain; its full sequence is Small ribosomal subunit protein uS8 (131 aa).

Belongs to the universal ribosomal protein uS8 family. In terms of assembly, part of the 30S ribosomal subunit. Contacts proteins S5 and S12.

In terms of biological role, one of the primary rRNA binding proteins, it binds directly to 16S rRNA central domain where it helps coordinate assembly of the platform of the 30S subunit. This is Small ribosomal subunit protein uS8 from Variovorax paradoxus (strain S110).